A 118-amino-acid chain; its full sequence is Large ribosomal subunit protein bL20 (118 aa).

It belongs to the bacterial ribosomal protein bL20 family.

Its function is as follows. Binds directly to 23S ribosomal RNA and is necessary for the in vitro assembly process of the 50S ribosomal subunit. It is not involved in the protein synthesizing functions of that subunit. The sequence is that of Large ribosomal subunit protein bL20 from Synechococcus sp. (strain JA-2-3B'a(2-13)) (Cyanobacteria bacterium Yellowstone B-Prime).